Here is a 130-residue protein sequence, read N- to C-terminus: Small ribosomal subunit protein uS9 (130 aa).

This sequence belongs to the universal ribosomal protein uS9 family.

The protein is Small ribosomal subunit protein uS9 of Chromobacterium violaceum (strain ATCC 12472 / DSM 30191 / JCM 1249 / CCUG 213 / NBRC 12614 / NCIMB 9131 / NCTC 9757 / MK).